Consider the following 198-residue polypeptide: Molybdopterin synthase catalytic subunit (198 aa).

The span at 1-27 shows a compositional bias: low complexity; sequence MASQPPQEPTPTATSTPSTSALASLPP. A disordered region spans residues 1-40; that stretch reads MASQPPQEPTPTATSTPSTSALASLPPHLDPTTYPRTLTS. Residues 143–144, lysine 159, and 166–168 contribute to the substrate site; these read HR and KRE. A disordered region spans residues 176-198; that stretch reads EWRENRERDAEGKVVAEKQEERE.

The protein belongs to the MoaE family. MOCS2B subfamily. Heterotetramer; composed of 2 small (MOCS2A) and 2 large (MOCS2B) subunits.

The protein localises to the cytoplasm. It carries out the reaction 2 [molybdopterin-synthase sulfur-carrier protein]-C-terminal-Gly-aminoethanethioate + cyclic pyranopterin phosphate + H2O = molybdopterin + 2 [molybdopterin-synthase sulfur-carrier protein]-C-terminal Gly-Gly + 2 H(+). The protein operates within cofactor biosynthesis; molybdopterin biosynthesis. Functionally, catalytic subunit of the molybdopterin synthase complex, a complex that catalyzes the conversion of precursor Z into molybdopterin. Acts by mediating the incorporation of 2 sulfur atoms from thiocarboxylated MOCS2A into precursor Z to generate a dithiolene group. This chain is Molybdopterin synthase catalytic subunit, found in Aspergillus clavatus (strain ATCC 1007 / CBS 513.65 / DSM 816 / NCTC 3887 / NRRL 1 / QM 1276 / 107).